A 156-amino-acid chain; its full sequence is Nucleosome assembly protein 1-like 5 (156 aa).

The segment covering 1 to 16 (MADPEKQGPAESRAED) has biased composition (basic and acidic residues). Residues 1–58 (MADPEKQGPAESRAEDEVMEGAQGGEDAATGDSAAAPAAEEPQAPAENAPKPKKDFME) form a disordered region. Over residues 34–49 (AAAPAAEEPQAPAENA) the composition is skewed to low complexity. Positions 68-94 (VLALKKLQKRCDKIEAKFDKEFQALEK) form a coiled coil. Positions 120-156 (TLEGEDDEDDEEEDDEEEEEEEEAAAGATGGPNFAKK) are disordered. Acidic residues predominate over residues 122-143 (EGEDDEDDEEEDDEEEEEEEEA).

It belongs to the nucleosome assembly protein (NAP) family.

It localises to the nucleus. The polypeptide is Nucleosome assembly protein 1-like 5 (Nap1l5) (Mus musculus (Mouse)).